Here is a 321-residue protein sequence, read N- to C-terminus: Transaldolase (321 aa).

The active-site Schiff-base intermediate with substrate is Lys-132.

Belongs to the transaldolase family. Type 1 subfamily. As to quaternary structure, homodimer.

It localises to the cytoplasm. It carries out the reaction D-sedoheptulose 7-phosphate + D-glyceraldehyde 3-phosphate = D-erythrose 4-phosphate + beta-D-fructose 6-phosphate. It participates in carbohydrate degradation; pentose phosphate pathway; D-glyceraldehyde 3-phosphate and beta-D-fructose 6-phosphate from D-ribose 5-phosphate and D-xylulose 5-phosphate (non-oxidative stage): step 2/3. Functionally, transaldolase is important for the balance of metabolites in the pentose-phosphate pathway. This is Transaldolase from Rhizobium etli (strain ATCC 51251 / DSM 11541 / JCM 21823 / NBRC 15573 / CFN 42).